Reading from the N-terminus, the 175-residue chain is Mitochondrial inner membrane protease subunit 2 (175 aa).

Residues phenylalanine 19 to alanine 37 form a helical membrane-spanning segment. Active-site residues include serine 43 and lysine 91.

The protein belongs to the peptidase S26 family. IMP2 subfamily. In terms of assembly, heterodimer of 2 subunits, IMMPL1 and IMMPL2.

It localises to the mitochondrion inner membrane. Its function is as follows. Catalyzes the removal of transit peptides required for the targeting of proteins from the mitochondrial matrix, across the inner membrane, into the inter-membrane space. Known to process the nuclear encoded protein DIABLO. This is Mitochondrial inner membrane protease subunit 2 (Immp2l) from Mus musculus (Mouse).